Reading from the N-terminus, the 210-residue chain is Probable GTP-binding protein EngB (210 aa).

Residues 25–199 (TGIEVAFAGR…RQKLDTWFSE (175 aa)) form the EngB-type G domain. GTP contacts are provided by residues 33–40 (GRSNAGKS), 60–64 (GRTQL), 78–81 (DLPG), 145–148 (TKAD), and 178–180 (FSS). Residues serine 40 and threonine 62 each coordinate Mg(2+).

It belongs to the TRAFAC class TrmE-Era-EngA-EngB-Septin-like GTPase superfamily. EngB GTPase family. Requires Mg(2+) as cofactor.

Necessary for normal cell division and for the maintenance of normal septation. The polypeptide is Probable GTP-binding protein EngB (Shigella boydii serotype 4 (strain Sb227)).